Reading from the N-terminus, the 443-residue chain is D-inositol 3-phosphate glycosyltransferase (443 aa).

His26 is a binding site for 1D-myo-inositol 3-phosphate. UDP-N-acetyl-alpha-D-glucosamine-binding positions include 32 to 33 and Gly40; that span reads QP. 1D-myo-inositol 3-phosphate-binding positions include 37–42, Lys95, Tyr128, Thr152, and Arg172; that span reads DAGGMN. UDP-N-acetyl-alpha-D-glucosamine contacts are provided by Arg246, Lys251, and Gln304. Mg(2+)-binding residues include Tyr313, Arg314, and Ala316. Positions 326 and 334 each coordinate UDP-N-acetyl-alpha-D-glucosamine. Thr340 contacts Mg(2+).

The protein belongs to the glycosyltransferase group 1 family. MshA subfamily. As to quaternary structure, homodimer.

The catalysed reaction is 1D-myo-inositol 3-phosphate + UDP-N-acetyl-alpha-D-glucosamine = 1D-myo-inositol 2-acetamido-2-deoxy-alpha-D-glucopyranoside 3-phosphate + UDP + H(+). Its function is as follows. Catalyzes the transfer of a N-acetyl-glucosamine moiety to 1D-myo-inositol 3-phosphate to produce 1D-myo-inositol 2-acetamido-2-deoxy-glucopyranoside 3-phosphate in the mycothiol biosynthesis pathway. In Mycobacteroides abscessus (strain ATCC 19977 / DSM 44196 / CCUG 20993 / CIP 104536 / JCM 13569 / NCTC 13031 / TMC 1543 / L948) (Mycobacterium abscessus), this protein is D-inositol 3-phosphate glycosyltransferase.